A 359-amino-acid chain; its full sequence is 3-isopropylmalate dehydrogenase (359 aa).

77–88 (GPKWGTGDVRPE) serves as a coordination point for NAD(+). Substrate contacts are provided by Arg95, Arg105, Arg134, and Asp223. Mg(2+) is bound by residues Asp223, Asp248, and Asp252. 287–298 (GSAPDLPAGKVN) serves as a coordination point for NAD(+).

This sequence belongs to the isocitrate and isopropylmalate dehydrogenases family. In terms of assembly, homodimer. Mg(2+) is required as a cofactor. The cofactor is Mn(2+).

It localises to the cytoplasm. The catalysed reaction is (2R,3S)-3-isopropylmalate + NAD(+) = 4-methyl-2-oxopentanoate + CO2 + NADH. The protein operates within amino-acid biosynthesis; L-leucine biosynthesis; L-leucine from 3-methyl-2-oxobutanoate: step 3/4. In terms of biological role, catalyzes the oxidation of 3-carboxy-2-hydroxy-4-methylpentanoate (3-isopropylmalate) to 3-carboxy-4-methyl-2-oxopentanoate. The product decarboxylates to 4-methyl-2 oxopentanoate. In Diutina rugosa (Yeast), this protein is 3-isopropylmalate dehydrogenase (LEU2).